A 415-amino-acid chain; its full sequence is Trehalose synthase (415 aa).

The protein belongs to the glycosyltransferase group 1 family. Glycosyltransferase 4 subfamily. As to quaternary structure, homodimer. Mg(2+) serves as cofactor.

It carries out the reaction an NDP-alpha-D-glucose + D-glucose = alpha,alpha-trehalose + a ribonucleoside 5'-diphosphate + H(+). Its function is as follows. Synthesizes trehalose from ADP-, UDP- or GDP-glucose and glucose. The protein is Trehalose synthase of Pyrococcus horikoshii (strain ATCC 700860 / DSM 12428 / JCM 9974 / NBRC 100139 / OT-3).